Here is a 208-residue protein sequence, read N- to C-terminus: Urease accessory protein UreG (208 aa).

12 to 19 (GPVGAGKT) provides a ligand contact to GTP.

It belongs to the SIMIBI class G3E GTPase family. UreG subfamily. In terms of assembly, homodimer. UreD, UreF and UreG form a complex that acts as a GTP-hydrolysis-dependent molecular chaperone, activating the urease apoprotein by helping to assemble the nickel containing metallocenter of UreC. The UreE protein probably delivers the nickel.

Its subcellular location is the cytoplasm. Its function is as follows. Facilitates the functional incorporation of the urease nickel metallocenter. This process requires GTP hydrolysis, probably effectuated by UreG. In Rhodobacter capsulatus (Rhodopseudomonas capsulata), this protein is Urease accessory protein UreG.